A 454-amino-acid polypeptide reads, in one-letter code: MELRNKKLTHDEFMTERQQVLKTWETGKNVENFEDGVKYQQAIPEHKRFSLALLKADKEGKTLSQPRAGVALMDEHIELLKTLQEECDLLPSTIDAYTRLNRYEEAAVGIKKSIEAGTSKLNGLPVVNHGVAACRRLTETLQKPLQIRHGTPDARLLAKISMASGFTSYEGGGISYNIPYAKRVTLEKSIRDWQYCDRLMGMYEEHGIRINREPFGPLTGTLIPPFISHSIAIIEGLLALEQSVKSITVGYGQVGSLTQDVAAIQSLRELAHEYFQSYGYTDYELSTVFHQWMGGFPEDESKAFAIISWGAAVAGMSGATKVITKSPHEAWGIPTAAANIQGLKASRQMLNMVNEQKFPPCPAVELEIELIKSEVRAVLNKVFELGNGDIARGTVLAFEAGVLEAGAVPLPKDILDLHHDYVAERARCEGRQPTFQMVVDDINAVSHSKLIGRP.

Arg-67 is a binding site for L-glutamate. Gly-69 is a binding site for adenosylcob(III)alamin. Arg-99 provides a ligand contact to L-glutamate. Asn-122 provides a ligand contact to adenosylcob(III)alamin. L-glutamate-binding positions include 148 to 149 (RH), Glu-170, and Tyr-176. Pro-179 serves as a coordination point for adenosylcob(III)alamin. An L-glutamate-binding site is contributed by Tyr-180. Positions 296, 325, 329, and 333 each coordinate adenosylcob(III)alamin.

The protein belongs to the methylaspartate mutase GlmE subunit family. In terms of assembly, heterotetramer composed of 2 epsilon subunits (GlmE) and 2 sigma subunits (GlmS). GlmE exists as a homodimer and GlmS as a monomer. It depends on adenosylcob(III)alamin as a cofactor.

The catalysed reaction is (2S,3S)-3-methyl-L-aspartate = L-glutamate. It participates in amino-acid degradation; L-glutamate degradation via mesaconate pathway; acetate and pyruvate from L-glutamate: step 1/4. In terms of biological role, catalyzes the carbon skeleton rearrangement of L-glutamate to L-threo-3-methylaspartate ((2S,3S)-3-methylaspartate). The protein is Glutamate mutase epsilon subunit of Shigella dysenteriae serotype 1 (strain Sd197).